The primary structure comprises 573 residues: Putative adenine deaminase PTO1085 (573 aa).

It belongs to the metallo-dependent hydrolases superfamily. Adenine deaminase family.

It catalyses the reaction adenine + H2O + H(+) = hypoxanthine + NH4(+). The sequence is that of Putative adenine deaminase PTO1085 from Picrophilus torridus (strain ATCC 700027 / DSM 9790 / JCM 10055 / NBRC 100828 / KAW 2/3).